Consider the following 406-residue polypeptide: Vitamin D3 dihydroxylase (406 aa).

The segment covering 1-15 (MTDTATTPQTTDAPA) has biased composition (low complexity). A disordered region spans residues 1–24 (MTDTATTPQTTDAPAFPSNRSCPY). Threonine 81 contacts calciol. Heme is bound by residues histidine 103 and arginine 107. Residues arginine 193, serine 236, and isoleucine 293 each contribute to the calciol site. Residues arginine 297, histidine 353, and cysteine 355 each coordinate heme.

This sequence belongs to the cytochrome P450 family. Heme serves as cofactor.

It is found in the cytoplasm. It carries out the reaction calciol + 2 reduced [2Fe-2S]-[ferredoxin] + O2 + 2 H(+) = calcidiol + 2 oxidized [2Fe-2S]-[ferredoxin] + H2O. The catalysed reaction is calcidiol + 2 reduced [2Fe-2S]-[ferredoxin] + O2 + 2 H(+) = calcitriol + 2 oxidized [2Fe-2S]-[ferredoxin] + H2O. In terms of biological role, involved in the metabolism of vitamin D3 (calciol) and of a number of sulfonylurea herbicides. Catalyzes the two-step hydroxylation (25- and 1-alpha-hydroxylation) of vitamin D3 (VD3) to yield its active form 1-alpha,25-dihydroxyvitamin D3 (calcitriol). The first step is the hydroxylation of the C-25 position of VD3 to produce 25-hydroxyvitamin D3 (calcidiol). The second reaction is the hydroxylation of the C1-alpha-position of calcidiol to produce calcitriol. It can also hydroxylate vitamin D2. This Streptomyces griseolus protein is Vitamin D3 dihydroxylase.